The chain runs to 452 residues: Tripartite motif-containing protein 49 (452 aa).

The RING-type zinc-finger motif lies at 15 to 56 (CPLCMNYFIDPVTIDCGHSFCRPCFYLNWQDIPFLVQCSECT). Residues 88–129 (SEEQMCGTHRETKKIFCEVDRSLLCLLCSSSQEHRYHRHRPI) form a B box-type zinc finger. Cys-93, His-96, Cys-115, and His-121 together coordinate Zn(2+). The region spanning 269–452 (ELSAGPITGL…LRPIFCCIHF (184 aa)) is the B30.2/SPRY domain.

The protein belongs to the TRIM/RBCC family. As to expression, preferentially expressed in testis.

This Homo sapiens (Human) protein is Tripartite motif-containing protein 49 (TRIM49).